Consider the following 84-residue polypeptide: ATP synthase subunit c (84 aa).

The next 2 membrane-spanning stretches (helical) occupy residues 13–33 and 56–76; these read IAVG…WGLI and FIFA…GFWF.

It belongs to the ATPase C chain family. As to quaternary structure, F-type ATPases have 2 components, F(1) - the catalytic core - and F(0) - the membrane proton channel. F(1) has five subunits: alpha(3), beta(3), gamma(1), delta(1), epsilon(1). F(0) has three main subunits: a(1), b(2) and c(10-14). The alpha and beta chains form an alternating ring which encloses part of the gamma chain. F(1) is attached to F(0) by a central stalk formed by the gamma and epsilon chains, while a peripheral stalk is formed by the delta and b chains.

The protein localises to the cell inner membrane. Functionally, f(1)F(0) ATP synthase produces ATP from ADP in the presence of a proton or sodium gradient. F-type ATPases consist of two structural domains, F(1) containing the extramembraneous catalytic core and F(0) containing the membrane proton channel, linked together by a central stalk and a peripheral stalk. During catalysis, ATP synthesis in the catalytic domain of F(1) is coupled via a rotary mechanism of the central stalk subunits to proton translocation. In terms of biological role, key component of the F(0) channel; it plays a direct role in translocation across the membrane. A homomeric c-ring of between 10-14 subunits forms the central stalk rotor element with the F(1) delta and epsilon subunits. The protein is ATP synthase subunit c of Acidithiobacillus ferrooxidans (strain ATCC 23270 / DSM 14882 / CIP 104768 / NCIMB 8455) (Ferrobacillus ferrooxidans (strain ATCC 23270)).